A 354-amino-acid chain; its full sequence is Guanine nucleotide-binding protein G(i) subunit alpha-3 (354 aa).

Gly-2 carries N-myristoyl glycine lipidation. A lipid anchor (S-palmitoyl cysteine) is attached at Cys-3. Residues Lys-32–Tyr-354 enclose the G-alpha domain. The tract at residues Lys-35–Thr-48 is G1 motif. Residues Gly-42, Glu-43, Ser-44, Gly-45, Lys-46, Ser-47, Thr-48, Asp-150, Ser-151, Leu-175, Arg-176, Thr-177, Arg-178, Val-179, Lys-180, Thr-181, Val-201, Gly-203, Asn-269, Lys-270, Asp-272, Leu-273, Cys-325, Ala-326, and Thr-327 each contribute to the GTP site. Position 47 (Ser-47) interacts with Mg(2+). Residues Asp-173–Thr-181 are G2 motif. Thr-181 is a Mg(2+) binding site. Residues Phe-196–Arg-205 are G3 motif. The tract at residues Ile-265 to Asp-272 is G4 motif. The G5 motif stretch occupies residues Thr-324–Thr-329.

It belongs to the G-alpha family. G(i/o/t/z) subfamily. In terms of assembly, heterotrimeric G proteins are composed of 3 units; alpha, beta and gamma. The alpha subunit contains the guanine nucleotide binding site. GTP binding causes dissociation of the heterotrimer, liberating the individual subunits so that they can interact with downstream effector proteins. Forms a complex with CCDC88A/GIV and EGFR which leads to enhanced EGFR signaling and triggering of cell migration; ligand stimulation is required for recruitment of GNAI3 to the complex. Interacts (inactive GDP-bound form) with CCDC88A/GIV (via GBA motif); the interaction leads to activation of GNAI3. Interacts (inactive GDP-bound form) with CCDC88C/DAPLE (via GBA motif); the interaction leads to activation of GNAI3. Interacts (inactive GDP-bound form) with NUCB1 (via GBA motif) and NUCB2 (via GBA motif); the interaction leads to activation of GNAI3. Interacts (inactive GDP-bound form) with PLCD4 (via GBA motif); the interaction leads to activation of GNAI3. Interacts with INSR; the interaction is probably mediated by CCDC88A/GIV. Interacts with GPSM1. Interacts (GDP-bound form) with GPSM2 (via GoLoco domains). Does not interact with RGS2. Interacts with RGS8 and RGS10; this strongly enhances the intrinsic GTPase activity. Interacts with RGS16; this strongly enhances the intrinsic GTPase activity. Interacts with RGS12. Interacts (via active GTP- or inactive GDP-bound form) with RGS14. Interacts (via active GTP-bound form) with TRPC5 (via ANK repeats) in a homotetrameric ion channel; the interaction is direct and activates the channel activity.

It localises to the cytoplasm. It is found in the cell membrane. The protein localises to the cytoskeleton. The protein resides in the microtubule organizing center. Its subcellular location is the centrosome. In terms of biological role, heterotrimeric guanine nucleotide-binding proteins (G proteins) function as transducers downstream of G protein-coupled receptors (GPCRs) in numerous signaling cascades. The alpha chain contains the guanine nucleotide binding site and alternates between an active, GTP-bound state and an inactive, GDP-bound state. Signaling by an activated GPCR promotes GDP release and GTP binding. The alpha subunit has a low GTPase activity that converts bound GTP to GDP, thereby terminating the signal. Both GDP release and GTP hydrolysis are modulated by numerous regulatory proteins. Signaling is mediated via effector proteins, such as adenylate cyclase. Inhibits adenylate cyclase activity, leading to decreased intracellular cAMP levels. Stimulates the activity of receptor-regulated K(+) channels. The active GTP-bound form prevents the association of RGS14 with centrosomes and is required for the translocation of RGS14 from the cytoplasm to the plasma membrane. May play a role in cell division. The active GTP-bound form activates the calcium permeant TRPC5 ion channels. The polypeptide is Guanine nucleotide-binding protein G(i) subunit alpha-3 (Gnai3) (Mus musculus (Mouse)).